Reading from the N-terminus, the 237-residue chain is ATP synthase subunit 4, mitochondrial (237 aa).

A mitochondrion-targeting transit peptide spans 1 to 30; it reads MFRALTLKASARPVVAGLCSRQAPIAAVRY.

It belongs to the eukaryotic ATPase B chain family.

Its subcellular location is the mitochondrion. It is found in the mitochondrion inner membrane. Mitochondrial membrane ATP synthase (F(1)F(0) ATP synthase or Complex V) produces ATP from ADP in the presence of a proton gradient across the membrane which is generated by electron transport complexes of the respiratory chain. F-type ATPases consist of two structural domains, F(1) - containing the extramembraneous catalytic core, and F(0) - containing the membrane proton channel, linked together by a central stalk and a peripheral stalk. During catalysis, ATP synthesis in the catalytic domain of F(1) is coupled via a rotary mechanism of the central stalk subunits to proton translocation. Part of the complex F(0) domain and the peripheric stalk, which acts as a stator to hold the catalytic alpha(3)beta(3) subcomplex and subunit a/ATP6 static relative to the rotary elements. The polypeptide is ATP synthase subunit 4, mitochondrial (ATP4) (Kluyveromyces lactis (strain ATCC 8585 / CBS 2359 / DSM 70799 / NBRC 1267 / NRRL Y-1140 / WM37) (Yeast)).